The chain runs to 579 residues: Probable N-acetylgalactosaminyltransferase 9 (579 aa).

Residues M1–T12 lie on the Cytoplasmic side of the membrane. The helical; Signal-anchor for type II membrane protein transmembrane segment at F13–H30 threads the bilayer. At R31–A579 the chain is on the lumenal side. N67 carries an N-linked (GlcNAc...) asparagine glycan. 5 disulfides stabilise this stretch: C123–C356, C347–C427, C464–C483, C507–C520, and C545–C562. The catalytic subdomain A stretch occupies residues L133–R243. Positions 174 and 204 each coordinate substrate. D227 contributes to the Mn(2+) binding site. S228 provides a ligand contact to substrate. Position 229 (H229) interacts with Mn(2+). The interval Y302 to R364 is catalytic subdomain B. Residue W333 coordinates substrate. Residue H361 participates in Mn(2+) binding. 3 residues coordinate substrate: R364, H367, and Y369. N370 is a glycosylation site (N-linked (GlcNAc...) asparagine). Residues A450–I574 form the Ricin B-type lectin domain.

It belongs to the glycosyltransferase 2 family. GalNAc-T subfamily. Requires Mn(2+) as cofactor.

The protein localises to the golgi apparatus membrane. The protein operates within protein modification; protein glycosylation. Its function is as follows. Probable glycopeptide transferase involved in O-linked oligosaccharide biosynthesis. Glycopeptide transferases catalyze the transfer of an N-acetyl-D-galactosamine residue to an already glycosylated peptide. In contrast to other members of the family, it does not act as a peptide transferase that transfers GalNAc onto serine or threonine residue on peptides that have been tested. Some peptide transferase activity is however not excluded, considering that its appropriate peptide substrate may remain unidentified. The polypeptide is Probable N-acetylgalactosaminyltransferase 9 (gly-9) (Caenorhabditis elegans).